Reading from the N-terminus, the 464-residue chain is Siroheme synthase (464 aa).

Residues 1–203 form a precorrin-2 dehydrogenase /sirohydrochlorin ferrochelatase region; it reads MDYLPLFHKL…GQGAEAERLL (203 aa). NAD(+) is bound by residues 22–23 and 43–44; these read EI and PE. Serine 128 is modified (phosphoserine). Positions 216 to 464 are uroporphyrinogen-III C-methyltransferase; sequence GEVYLVGAGP…AWFEGSQQDQ (249 aa). S-adenosyl-L-methionine is bound at residue proline 225. Residue aspartate 248 is the Proton acceptor of the active site. Lysine 270 acts as the Proton donor in catalysis. S-adenosyl-L-methionine contacts are provided by residues 301 to 303, isoleucine 306, 331 to 332, methionine 383, and glycine 412; these read GGD and TA.

The protein in the N-terminal section; belongs to the precorrin-2 dehydrogenase / sirohydrochlorin ferrochelatase family. It in the C-terminal section; belongs to the precorrin methyltransferase family.

It catalyses the reaction uroporphyrinogen III + 2 S-adenosyl-L-methionine = precorrin-2 + 2 S-adenosyl-L-homocysteine + H(+). The catalysed reaction is precorrin-2 + NAD(+) = sirohydrochlorin + NADH + 2 H(+). It carries out the reaction siroheme + 2 H(+) = sirohydrochlorin + Fe(2+). It participates in cofactor biosynthesis; adenosylcobalamin biosynthesis; precorrin-2 from uroporphyrinogen III: step 1/1. Its pathway is cofactor biosynthesis; adenosylcobalamin biosynthesis; sirohydrochlorin from precorrin-2: step 1/1. The protein operates within porphyrin-containing compound metabolism; siroheme biosynthesis; precorrin-2 from uroporphyrinogen III: step 1/1. It functions in the pathway porphyrin-containing compound metabolism; siroheme biosynthesis; siroheme from sirohydrochlorin: step 1/1. It participates in porphyrin-containing compound metabolism; siroheme biosynthesis; sirohydrochlorin from precorrin-2: step 1/1. Multifunctional enzyme that catalyzes the SAM-dependent methylations of uroporphyrinogen III at position C-2 and C-7 to form precorrin-2 via precorrin-1. Then it catalyzes the NAD-dependent ring dehydrogenation of precorrin-2 to yield sirohydrochlorin. Finally, it catalyzes the ferrochelation of sirohydrochlorin to yield siroheme. This Pseudomonas putida (strain W619) protein is Siroheme synthase.